Reading from the N-terminus, the 484-residue chain is Gasdermin-D (484 aa).

Tyr-37 is modified (phosphotyrosine). Cys-56 is subject to S-(2-succinyl)cysteine. 2 beta stranded membrane passes run 91-97 (QGSVELA) and 103-108 (KIAGGA). Tyr-158 bears the Phosphotyrosine mark. The next 2 membrane-spanning stretches (beta stranded) occupy residues 180–186 (GSGRFSL) and 191–197 (CLQGEGQ). Residue Ser-185 is modified to Phosphoserine. Cys-191 and Cys-268 each carry S-(2-succinyl)cysteine. A lipid anchor (S-palmitoyl cysteine) is attached at Cys-191. Residues 277–296 (VPAEGAFTEDFQGLRAEVET) are linker helix loop. Position 309 is an S-(2-succinyl)cysteine (Cys-309). Ser-338 is a glycosylation site (O-linked (GlcNAc) serine). An S-(2-succinyl)cysteine modification is found at Cys-467.

The protein belongs to the gasdermin family. As to quaternary structure, homooligomer; homooligomeric ring-shaped pore complex containing 27-28 subunits when inserted in the membrane. Homooligomerization is promoted by the mTORC1 complex in macrophages. In response to a canonical inflammasome stimulus, such as nigericin, recruited to NLRP3 inflammasone with similar kinetics to that of uncleaved CASP1 precursor. Although this recruitment is also observed in the absence of PYCARD, it is more efficient in its presence. Cleavage at Asp-275 by CASP1 (mature and uncleaved precursor forms), CASP4, CASP5 or CASP8 relieves autoinhibition and is sufficient to initiate pyroptosis. Cleavage by CASP1 and CASP4 is not strictly dependent on the consensus cleavage site on GSDMD but depends on an exosite interface on CASP1 that recognizes and binds the Gasdermin-D, C-terminal (GSDMD-CT) part. Cleavage by CASP8 takes place following inactivation of MAP3K7/TAK1 by Yersinia toxin YopJ. Cleavage at Asp-87 by CASP3 or CASP7 inactivates the ability to mediate pyroptosis, but generates the Gasdermin-D, p13 chain, which translocates to the nucleus and acts as a transcription regulator. Cleavage by papain allergen generates the Gasdermin-D, p40 chain. In terms of processing, palmitoylated at Cys-191 by ZDHHC5 and ZDHHC9 in response to microbial infection and danger signals. Palmitoylation takes place before cleavage by caspases (CASP1, CASP4, CASP5 or CASP8) and is required for membrane translocation and pore formation. Depalmitoylated by LYPLA2. Post-translationally, succination of Cys-191 by the Krebs cycle intermediate fumarate, which leads to S-(2-succinyl)cysteine residues, inhibits processing by caspases, and ability to initiate pyroptosis. Succination modification is catalyzed by a non-enzymatic reaction caused by an accumulation of fumarate. Glycosylated: O-GlcNAcylation by OGT leads to reduced cleavage by CASP4 and decreased LPS-induced endothelial cell pyroptosis. In terms of processing, (Microbial infection) Cleaved and inactivated by Protease 3C from Human enterovirus 71 (EV71), preventing GSDMD-mediated pyroptosis. Post-translationally, (Microbial infection) Cleaved and inactivated by the 3C-like proteinase nsp5 from human coronavirus SARS-CoV-2, preventing GSDMD-mediated pyroptosis. (Microbial infection) Ubiquitinated by S.flexneri IpaH7.8, leading to its degradation by the proteasome. As to expression, expressed in the suprabasal cells of esophagus, as well as in the isthmus/neck, pit, and gland of the stomach, suggesting preferential expression in differentiating cells.

It localises to the cytoplasm. The protein localises to the cytosol. It is found in the inflammasome. The protein resides in the cell membrane. Its subcellular location is the secreted. It localises to the mitochondrion membrane. The protein localises to the nucleus. Its activity is regulated as follows. The full-length protein before cleavage is inactive: intramolecular interactions between N- and C-terminal domains mediate autoinhibition in the absence of activation signal. The intrinsic pyroptosis-inducing activity is carried by the released N-terminal moiety (Gasdermin-D, N-terminal) following cleavage by caspases CASP1, CASP4, CASP5 or CASP8. Cleavage at Asp-87 by CASP3 or CASP7 inactivates the ability to mediate pyroptosis. Homooligomerization and pore formation is specifically inhibited by VHH(GSDMD-1) and, to a lesser extent, VHH(GSDMD-2) nanobodies, protecting against excessive pyroptosis. Inhibited by small molecule NU6300, which covalently reacts with Cys-191, thereby preventing palmitoylation and pyroptosis. In terms of biological role, precursor of a pore-forming protein that plays a key role in host defense against pathogen infection and danger signals. This form constitutes the precursor of the pore-forming protein: upon cleavage, the released N-terminal moiety (Gasdermin-D, N-terminal) binds to membranes and forms pores, triggering pyroptosis. Promotes pyroptosis in response to microbial infection and danger signals. Produced by the cleavage of gasdermin-D by inflammatory caspases CASP1, CASP4 or CASP5 in response to canonical, as well as non-canonical (such as cytosolic LPS) inflammasome activators. After cleavage, moves to the plasma membrane where it strongly binds to inner leaflet lipids, including monophosphorylated phosphatidylinositols, such as phosphatidylinositol 4-phosphate, bisphosphorylated phosphatidylinositols, such as phosphatidylinositol (4,5)-bisphosphate, as well as phosphatidylinositol (3,4,5)-bisphosphate, and more weakly to phosphatidic acid and phosphatidylserine. Homooligomerizes within the membrane and forms pores of 10-15 nanometers (nm) of inner diameter, allowing the release of mature interleukin-1 (IL1B and IL18) and triggering pyroptosis. Gasdermin pores also allow the release of mature caspase-7 (CASP7). In some, but not all, cells types, pyroptosis is followed by pyroptotic cell death, which is caused by downstream activation of ninjurin-1 (NINJ1), which mediates membrane rupture (cytolysis). Also forms pores in the mitochondrial membrane, resulting in release of mitochondrial DNA (mtDNA) into the cytosol. Gasdermin-D, N-terminal released from pyroptotic cells into the extracellular milieu rapidly binds to and kills both Gram-negative and Gram-positive bacteria, without harming neighboring mammalian cells, as it does not disrupt the plasma membrane from the outside due to lipid-binding specificity. Under cell culture conditions, also active against intracellular bacteria, such as Listeria monocytogenes. Also active in response to MAP3K7/TAK1 inactivation by Yersinia toxin YopJ, which triggers cleavage by CASP8 and subsequent activation. Required for mucosal tissue defense against enteric pathogens. Activation of the non-canonical inflammasome in brain endothelial cells can lead to excessive pyroptosis, leading to blood-brain barrier breakdown. Strongly binds to bacterial and mitochondrial lipids, including cardiolipin. Does not bind to unphosphorylated phosphatidylinositol, phosphatidylethanolamine nor phosphatidylcholine. Functionally, transcription coactivator produced by the cleavage by CASP3 or CASP7 in the upper small intestine in response to dietary antigens. Required to maintain food tolerance in small intestine: translocates to the nucleus and acts as a coactivator for STAT1 to induce the transcription of CIITA and MHC class II molecules, which in turn induce type 1 regulatory T (Tr1) cells in upper small intestine. Its function is as follows. Produced by the cleavage by papain allergen. After cleavage, moves to the plasma membrane and homooligomerizes within the membrane and forms pores of 10-15 nanometers (nm) of inner diameter, allowing the specific release of mature interleukin-33 (IL33), promoting type 2 inflammatory immune response. This Homo sapiens (Human) protein is Gasdermin-D.